A 1511-amino-acid chain; its full sequence is ATP-dependent permease PDR12 (1511 aa).

A compositionally biased stretch (basic and acidic residues) spans 1–21 (MSSTDEHIEKDISSRSNHDDD). The tract at residues 1–37 (MSSTDEHIEKDISSRSNHDDDYANSVQSYAASEGQVD) is disordered. At serine 2 the chain carries N-acetylserine. The Cytoplasmic portion of the chain corresponds to 2–508 (SSTDEHIEKD…RGFQRVKGDS (507 aa)). Residues serine 32, serine 52, and serine 56 each carry the phosphoserine modification. The 254-residue stretch at 144–397 (IPAHLISKFT…FQRMGWVKPN (254 aa)) folds into the ABC transporter 1 domain. Lysine 426 is covalently cross-linked (Glycyl lysine isopeptide (Lys-Gly) (interchain with G-Cter in ubiquitin)). Residues 509–529 (TYTKVYLSSFLIKALIIGSMF) traverse the membrane as a helical segment. The Extracellular segment spans residues 530–548 (HKIDDKSQSTTAGAYSRGG). A helical membrane pass occupies residues 549–569 (MLFYVLLFASVTSLAEIGNSF). The Cytoplasmic segment spans residues 570-597 (SSRPVIVKHKSYSMYHLSAESLQEIITE). A helical membrane pass occupies residues 598 to 618 (FPTKFVAIVILCLITYWIPFM). Residues 619–622 (KYEA) are Extracellular-facing. A helical transmembrane segment spans residues 623-643 (GAFFQYILYLLTVQQCTSFIF). Residues 644–657 (KFVATMSKSGVDAH) lie on the Cytoplasmic side of the membrane. Residues 658-678 (AVGGLWVLMLCVYAGFVLPIG) form a helical membrane-spanning segment. At 679 to 765 (EMHHWIRWLH…FAYKHAWRNW (87 aa)) the chain is on the extracellular side. A helical transmembrane segment spans residues 766–786 (GVNIVWTFGYIVFNVILSEYL). Over 787–1182 (KPVEGGGDLL…WRSPVYIRAK (396 aa)) the chain is Cytoplasmic. The 249-residue stretch at 836 to 1084 (IAEKDVFTWN…TLLKYFERQS (249 aa)) folds into the ABC transporter 2 domain. Residues 878-885 (GESGAGKT) and 972-979 (AEALVGKT) contribute to the ATP site. The chain crosses the membrane as a helical span at residues 1183-1203 (FFECVACALFVGLSYVGVNHS). Residue valine 1204 is a topological domain, extracellular. Residues 1205-1225 (GGAIEAFSSIFMLLLIALAMI) form a helical membrane-spanning segment. Residues 1226-1254 (NQLHVFAYDSRELYEVREAASNTFHWSVL) lie on the Cytoplasmic side of the membrane. Residues 1255 to 1275 (LLCHAAVENFWSTLCQFMCFI) form a helical membrane-spanning segment. The Extracellular segment spans residues 1276–1291 (CYYWPAQFSGRASHAG). The chain crosses the membrane as a helical span at residues 1292–1312 (FFFFFYVLIFPLYFVTYGLWI). Over 1313–1318 (LYMSPD) the chain is Cytoplasmic. Residues 1319 to 1339 (VPSASMINSNLFAAMLLFCGI) form a helical membrane-spanning segment. The Extracellular portion of the chain corresponds to 1340–1444 (LQPREKMPAF…NVKWDHRWRN (105 aa)). Asparagine 1405 carries N-linked (GlcNAc...) asparagine glycosylation. A helical membrane pass occupies residues 1445–1465 (FGFMWAYICFNIAAMLICYYV). The Cytoplasmic portion of the chain corresponds to 1466–1511 (VRVKVWSLKSVLNFKKWFNGPRKERHEKDTNIFQTVPGDENKITKK).

The protein belongs to the ABC transporter superfamily. ABCG family. PDR (TC 3.A.1.205) subfamily.

The protein resides in the cell membrane. Plasma membrane transporter which mediates resistance to water-soluble, monocarboxylic acids with chain lengths of from C1 to C7 by active extrusion of the preservative anions from the cytosol. Also involved in the export of aromatic and branched-chain organic acids produced in amino acid catabolism. The chain is ATP-dependent permease PDR12 (PDR12) from Saccharomyces cerevisiae (strain ATCC 204508 / S288c) (Baker's yeast).